The sequence spans 515 residues: SWI/SNF-related matrix-associated actin-dependent regulator of chromatin subfamily D member 1 (515 aa).

Residues 1 to 128 (MAARAGFQSV…RNHNAKKKKM (128 aa)) form a disordered region. The span at 14–23 (GGAGASGGAG) shows a compositional bias: gly residues. Residues 43-167 (APGQGLYRSP…DQTIMRKRLD (125 aa)) are interaction with ESR1, NR1H4, NR3C1, PGR and SMARCA4. Arg-68 and Arg-88 each carry asymmetric dimethylarginine. Residue Lys-101 forms a Glycyl lysine isopeptide (Lys-Gly) (interchain with G-Cter in SUMO2) linkage. Low complexity predominate over residues 104–117 (APQQIQQVQQQAVQ). Residues 168 to 474 (IQEALKRPIK…TMTDVVGNPE (307 aa)) are interaction with SMARCC1 and SMARCC2. The tract at residues 180-515 (RKLRIFISNT…LEQALGIRNT (336 aa)) is necessary for GR/NR3C1-mediated remodeling and transcription from chromatin; required for GR/NR3C1 interaction with the BRG1/SMARCA4 complex in vivo. The residue at position 203 (Thr-203) is a Phosphothreonine. Lys-223 is subject to N6-acetyllysine. Residues 290-367 (YQPPQFKLDP…PQRLHALLMP (78 aa)) enclose the SWIB/MDM2 domain. The stretch at 412–440 (ASQQEIATLDNKIHETIETINQLKTQREF) forms a coiled coil.

This sequence belongs to the SMARCD family. Component of the multiprotein chromatin-remodeling complexes SWI/SNF: SWI/SNF-A (BAF), SWI/SNF-B (PBAF) and related complexes. The canonical complex contains a catalytic subunit (either SMARCA4/BRG1/BAF190A or SMARCA2/BRM/BAF190B), and at least SMARCE1, ACTL6A/BAF53, SMARCC1/BAF155, SMARCC2/BAF170, and SMARCB1/SNF5/BAF47. Other subunits specific to each of the complexes may also be present permitting several possible combinations developmentally and tissue specific. Component of the BAF complex, which includes at least actin (ACTB), ARID1A/BAF250A, ARID1B/BAF250B, SMARCA2/BRM, SMARCA4/BRG1/BAF190A, ACTL6A/BAF53, ACTL6B/BAF53B, SMARCE1/BAF57, SMARCC1/BAF155, SMARCC2/BAF170, SMARCB1/SNF5/INI1, and one or more SMARCD1/BAF60A, SMARCD2/BAF60B, or SMARCD3/BAF60C. In muscle cells, the BAF complex also contains DPF3. Component of neural progenitors-specific chromatin remodeling complex (npBAF complex) composed of at least, ARID1A/BAF250A or ARID1B/BAF250B, SMARCD1/BAF60A, SMARCD3/BAF60C, SMARCA2/BRM/BAF190B, SMARCA4/BRG1/BAF190A, SMARCB1/BAF47, SMARCC1/BAF155, SMARCE1/BAF57, SMARCC2/BAF170, PHF10/BAF45A, ACTL6A/BAF53A and actin. Component of neuron-specific chromatin remodeling complex (nBAF complex) composed of at least, ARID1A/BAF250A or ARID1B/BAF250B, SMARCD1/BAF60A, SMARCD3/BAF60C, SMARCA2/BRM/BAF190B, SMARCA4/BRG1/BAF190A, SMARCB1/BAF47, SMARCC1/BAF155, SMARCE1/BAF57, SMARCC2/BAF170, DPF1/BAF45B, DPF3/BAF45C, ACTL6B/BAF53B and actin. Component of the SWI/SNF-B (PBAF) chromatin remodeling complex, at least composed of SMARCA4/BRG1, SMARCB1/BAF47/SNF5, ACTL6A/BAF53A or ACTL6B/BAF53B, SMARCE1/BAF57, SMARCD1/BAF60A, SMARCD2/BAF60B, perhaps SMARCD3/BAF60C, SMARCC1/BAF155, SMARCC2/BAF170, PBRM1/BAF180, ARID2/BAF200 and actin (ACTB). Component of SWI/SNF (GBAF) subcomplex, which includes at least BICRA or BICRAL (mutually exclusive), BRD9, SS18, SMARCA2/BRM, SMARCA4/BRG1/BAF190A, ACTL6A/BAF53, SMARCC1/BAF155, and SMARCD1/BAF60A. Specifically interacts with the VDR heterodimer complex. Interacts with ESR1, NR3C1, NR1H4, PGR, SMARCA4, SMARCC1 and SMARCC2. Interacts with DPF2. Interacts with DPF3a (isoform 2 of DPF3/BAF45C) and with HDGFL2 in a DPF3a-dependent manner. Interacts with FOS, FOSB isoform 1 and 2, FOSL1 and FOSL2. Interacts with AKIRIN2. As to expression, ubiquitous.

The protein localises to the nucleus. Functionally, involved in transcriptional activation and repression of select genes by chromatin remodeling (alteration of DNA-nucleosome topology). Component of SWI/SNF chromatin remodeling complexes that carry out key enzymatic activities, changing chromatin structure by altering DNA-histone contacts within a nucleosome in an ATP-dependent manner. Belongs to the neural progenitors-specific chromatin remodeling complex (npBAF complex) and the neuron-specific chromatin remodeling complex (nBAF complex). During neural development a switch from a stem/progenitor to a postmitotic chromatin remodeling mechanism occurs as neurons exit the cell cycle and become committed to their adult state. The transition from proliferating neural stem/progenitor cells to postmitotic neurons requires a switch in subunit composition of the npBAF and nBAF complexes. As neural progenitors exit mitosis and differentiate into neurons, npBAF complexes which contain ACTL6A/BAF53A and PHF10/BAF45A, are exchanged for homologous alternative ACTL6B/BAF53B and DPF1/BAF45B or DPF3/BAF45C subunits in neuron-specific complexes (nBAF). The npBAF complex is essential for the self-renewal/proliferative capacity of the multipotent neural stem cells. The nBAF complex along with CREST plays a role regulating the activity of genes essential for dendrite growth. Has a strong influence on vitamin D-mediated transcriptional activity from an enhancer vitamin D receptor element (VDRE). May be a link between mammalian SWI-SNF-like chromatin remodeling complexes and the vitamin D receptor (VDR) heterodimer. Mediates critical interactions between nuclear receptors and the BRG1/SMARCA4 chromatin-remodeling complex for transactivation. The protein is SWI/SNF-related matrix-associated actin-dependent regulator of chromatin subfamily D member 1 (Smarcd1) of Mus musculus (Mouse).